We begin with the raw amino-acid sequence, 279 residues long: NH(3)-dependent NAD(+) synthetase (279 aa).

An ATP-binding site is contributed by 39–46 (GLSGGIDS). A Mg(2+)-binding site is contributed by Asp45. Arg122 contacts deamido-NAD(+). Thr142 contacts ATP. Glu147 provides a ligand contact to Mg(2+). Positions 155 and 162 each coordinate deamido-NAD(+). Residues Lys171 and Ser193 each contribute to the ATP site. 253–254 (HK) provides a ligand contact to deamido-NAD(+).

This sequence belongs to the NAD synthetase family. In terms of assembly, homodimer.

It carries out the reaction deamido-NAD(+) + NH4(+) + ATP = AMP + diphosphate + NAD(+) + H(+). Its pathway is cofactor biosynthesis; NAD(+) biosynthesis; NAD(+) from deamido-NAD(+) (ammonia route): step 1/1. Its function is as follows. Catalyzes the ATP-dependent amidation of deamido-NAD to form NAD. Uses ammonia as a nitrogen source. The sequence is that of NH(3)-dependent NAD(+) synthetase from Sulfolobus acidocaldarius (strain ATCC 33909 / DSM 639 / JCM 8929 / NBRC 15157 / NCIMB 11770).